The chain runs to 328 residues: Malate dehydrogenase (328 aa).

12-18 (GAAGQIA) contacts NAD(+). R93 and R99 together coordinate substrate. NAD(+) contacts are provided by residues N106, Q113, and 130–132 (VGN). N132 and R163 together coordinate substrate. H188 acts as the Proton acceptor in catalysis.

Belongs to the LDH/MDH superfamily. MDH type 2 family.

It catalyses the reaction (S)-malate + NAD(+) = oxaloacetate + NADH + H(+). In terms of biological role, catalyzes the reversible oxidation of malate to oxaloacetate. In Burkholderia cenocepacia (strain ATCC BAA-245 / DSM 16553 / LMG 16656 / NCTC 13227 / J2315 / CF5610) (Burkholderia cepacia (strain J2315)), this protein is Malate dehydrogenase.